Reading from the N-terminus, the 230-residue chain is uncharacterized protein (230 aa).

The signal sequence occupies residues 1 to 16 (MTCVNVCFFLFPPCHR). 4 helical membrane passes run 27–47 (VDLL…IPLI), 118–138 (LFFF…FLFF), 150–170 (FPIL…LSFL), and 172–191 (SLSH…LRVF).

It is found in the cytoplasm. The protein localises to the nucleus membrane. This is an uncharacterized protein from Schizosaccharomyces pombe (strain 972 / ATCC 24843) (Fission yeast).